A 320-amino-acid chain; its full sequence is Ferrochelatase (320 aa).

Residues H194 and E275 each coordinate Fe cation.

The protein belongs to the ferrochelatase family. As to quaternary structure, monomer.

It is found in the cytoplasm. It carries out the reaction heme b + 2 H(+) = protoporphyrin IX + Fe(2+). It participates in porphyrin-containing compound metabolism; protoheme biosynthesis; protoheme from protoporphyrin-IX: step 1/1. In terms of biological role, catalyzes the ferrous insertion into protoporphyrin IX. The sequence is that of Ferrochelatase from Shigella flexneri serotype 5b (strain 8401).